The following is a 221-amino-acid chain: uncharacterized protein (221 aa).

This is an uncharacterized protein from Sinorhizobium fredii (strain NBRC 101917 / NGR234).